The chain runs to 46 residues: DNA-directed RNA polymerase subunit Rpo12 (46 aa).

Zn(2+) contacts are provided by cysteine 8, cysteine 23, and cysteine 26.

This sequence belongs to the archaeal Rpo12/eukaryotic RPC10 RNA polymerase subunit family. As to quaternary structure, part of the RNA polymerase complex. Requires Zn(2+) as cofactor.

It localises to the cytoplasm. The enzyme catalyses RNA(n) + a ribonucleoside 5'-triphosphate = RNA(n+1) + diphosphate. Functionally, DNA-dependent RNA polymerase (RNAP) catalyzes the transcription of DNA into RNA using the four ribonucleoside triphosphates as substrates. This chain is DNA-directed RNA polymerase subunit Rpo12, found in Archaeoglobus fulgidus (strain ATCC 49558 / DSM 4304 / JCM 9628 / NBRC 100126 / VC-16).